A 772-amino-acid chain; its full sequence is Ion-translocating oxidoreductase complex subunit C (772 aa).

4Fe-4S ferredoxin-type domains lie at 369-397 and 407-436; these read GEPQ…QQLY and KATT…VQYF. Residues Cys-377, Cys-380, Cys-383, Cys-387, Cys-416, Cys-419, Cys-422, and Cys-426 each contribute to the [4Fe-4S] cluster site. 3 disordered regions span residues 602–684, 696–717, and 727–746; these read KLEQ…DPRK, ARKL…PRKA, and KARK…QVDP. Residues 605–615 show a composition bias toward low complexity; sequence QQQANAEPEQQ.

This sequence belongs to the 4Fe4S bacterial-type ferredoxin family. RnfC subfamily. In terms of assembly, the complex is composed of six subunits: RsxA, RsxB, RsxC, RsxD, RsxE and RsxG. It depends on [4Fe-4S] cluster as a cofactor.

The protein resides in the cell inner membrane. Its function is as follows. Part of a membrane-bound complex that couples electron transfer with translocation of ions across the membrane. Required to maintain the reduced state of SoxR. The chain is Ion-translocating oxidoreductase complex subunit C from Escherichia coli O157:H7 (strain EC4115 / EHEC).